We begin with the raw amino-acid sequence, 482 residues long: MTKRISAEEKLNRKPISRACVFCHEKHLQCDVGRPCQNCEKRNIGESCRDNVRKVRKTRGRTPRSGVMNLRRARREHEDELAIATKSRGAGEPGSTGLPQVPSLSTLFDANVDPVIDEELLPATYVDPLGPSDVELPTSGAESFGSVWASSEYTKLNEILGSPGIERPRKHVPSKYEPFAVPATAEHSPSPSTPIELLQDHAGLLFRNTLRRHISLDTAQSSYQASTQDTQASTVASSVSCEGAQFPASEAEYTSPYSFRQLVRSPEDLYRHQNSIFPHNYRQAYLELLNILRARFLSAQDEIAREEGPKQLHSIAQSIKTYYAPIFVTLTSNLIESDLKMHELILQRTLLEYENMSKMVNCIPMCIWRRSGEICYVSNEFISLTGFSRRELLMRRRFIMEFFDNHGIVDYFKLFNEYLAFSSKEGFSSTSDGQAVFSECNLLMANNSFLKCACIWTVKRDSFNIPMLVMGQFLPIFDMDHT.

A DNA-binding region (zn(2)-C6 fungal-type) is located at residues 20–48 (CVFCHEKHLQCDVGRPCQNCEKRNIGESC). Residues 350 to 422 (LLEYENMSKM…KLFNEYLAFS (73 aa)) form the PAS domain.

Belongs to the ERT1/acuK family.

The protein resides in the nucleus. In terms of biological role, transcription factor which regulates nonfermentable carbon utilization. The sequence is that of Glucose starvation modulator protein 1 (GSM1) from Eremothecium gossypii (strain ATCC 10895 / CBS 109.51 / FGSC 9923 / NRRL Y-1056) (Yeast).